We begin with the raw amino-acid sequence, 444 residues long: Mitogen-activated protein kinase mpk-1 (444 aa).

2 stretches are compositionally biased toward polar residues: residues 1–17 (MPTW…TTRN) and 24–56 (GHPQ…HVRQ). A disordered region spans residues 1-56 (MPTWIPNNLCAQPTTRNAKPPSNGHPQATQQQSAPGSLAYRNSSNIPNGATNHVRQ). One can recognise a Protein kinase domain in the interval 96–384 (YVNLSYIGEG…IEQALAHPYL (289 aa)). ATP-binding positions include 102–110 (IGEGAYGMV) and lysine 125. Aspartate 220 functions as the Proton acceptor in the catalytic mechanism. Residue threonine 256 is modified to Phosphothreonine. Residues 256–258 (TEY) carry the TXY motif. Position 258 is a phosphotyrosine (tyrosine 258).

It belongs to the protein kinase superfamily. CMGC Ser/Thr protein kinase family. MAP kinase subfamily. In terms of assembly, isoform a interacts with gck-1 (via N-terminus). Requires Mg(2+) as cofactor. In terms of processing, isoform a is phosphorylated at the pachytene stage during oogenesis and is negatively regulated by gck-1. Isoform b is phosphorylated in proximal oocytes. As to expression, expressed in cells lining the rectum. Isoform a is expressed in nervous system, body wall muscles and posterior intestine. Isoform b expression may be restricted to germline.

It carries out the reaction L-seryl-[protein] + ATP = O-phospho-L-seryl-[protein] + ADP + H(+). It catalyses the reaction L-threonyl-[protein] + ATP = O-phospho-L-threonyl-[protein] + ADP + H(+). Activated by dual phosphorylation at Thr-256 and Tyr-258. May be inactivated by lip-1-mediated dephosphorylation. Functionally, functions in let-60 Ras signaling pathway; acts downstream of lin-45 raf kinase, but before the lin-1 gene product in controlling vulval cell differentiation. Plays a negative role in proximal germline proliferation in the mitotic zone. Required for progression of developing oocytes through the pachytene stage, perhaps acting after efl-1/dpl-1-mediated gene activation and before gld-1 down-regulation. May play a role in global X chromosome reactivation or be indirectly required for progression of germ cells through meiosis to the point where X reactivation occurs. In oocytes, inhibits the activity of the chloride channel clh-3, likely by activating gck-3. Plays a role in response to M.nematophilum-mediated bacterial infection by promoting tail swelling and preventing constipation. Involved in fluid homeostasis. In addition, involved in the up-regulation of lysozyme ilys-3 expression in the intestine in responses to M.nematophilum-mediated bacterial infection. By phosphorylating transcription factor skn-1 (isoform c) may play a role in increasing life span downstream of lin-45, let-60 and mek-2. By up-regulating cep-1 and down-regulating gld-1 expression in the late pachytene stage, plays a role in germline apoptosis in response to DNA damage. Regulates egl-1 expression in response to DNA damage, probably upstream of cep-1. Its function is as follows. Suppresses germline tumor formation by preventing the dedifferentiation of secondary spermatocytes probably upstream of rskn-1. In Caenorhabditis elegans, this protein is Mitogen-activated protein kinase mpk-1 (mpk-1).